A 415-amino-acid polypeptide reads, in one-letter code: Protein fuzzy homolog (415 aa).

Belongs to the fuzzy family. In terms of assembly, component of the CPLANE (ciliogenesis and planar polarity effectors) complex, composed of INTU, FUZ and WDPCP. Interacts with CPLANE1. Interacts with CPLANE2. Expressed in dermal and epidermal cells.

It is found in the cytoplasm. The protein localises to the cytoskeleton. Its subcellular location is the cilium basal body. In terms of biological role, probable planar cell polarity effector involved in cilium biogenesis. May regulate protein and membrane transport to the cilium. Proposed to function as core component of the CPLANE (ciliogenesis and planar polarity effectors) complex involved in the recruitment of peripheral IFT-A proteins to basal bodies. May regulate the morphogenesis of hair follicles which depends on functional primary cilia. Binds phosphatidylinositol 3-phosphate with highest affinity, followed by phosphatidylinositol 4-phosphate and phosphatidylinositol 5-phosphate. The protein is Protein fuzzy homolog (Fuz) of Mus musculus (Mouse).